A 937-amino-acid chain; its full sequence is DNA mismatch repair protein msh-2 (937 aa).

659–666 (GPNMGGKS) serves as a coordination point for ATP.

Belongs to the DNA mismatch repair MutS family. Heterodimer of msh2 and msh6.

Its subcellular location is the nucleus. In terms of biological role, involved in post-replicative DNA-mismatch repair. Binds to mismatch-containing DNA. This Neurospora crassa (strain ATCC 24698 / 74-OR23-1A / CBS 708.71 / DSM 1257 / FGSC 987) protein is DNA mismatch repair protein msh-2 (msh-2).